The following is a 467-amino-acid chain: Hydroxyacid-oxoacid transhydrogenase, mitochondrial (467 aa).

Lys-445 bears the N6-acetyllysine mark. The residue at position 452 (Ser-452) is a Phosphoserine.

It belongs to the iron-containing alcohol dehydrogenase family. Hydroxyacid-oxoacid transhydrogenase subfamily. In terms of tissue distribution, only expressed in adult liver.

The protein localises to the mitochondrion. It catalyses the reaction (S)-3-hydroxybutanoate + 2-oxoglutarate = (R)-2-hydroxyglutarate + acetoacetate. It carries out the reaction 4-hydroxybutanoate + 2-oxoglutarate = (R)-2-hydroxyglutarate + succinate semialdehyde. In terms of biological role, catalyzes the cofactor-independent reversible oxidation of gamma-hydroxybutyrate (GHB) to succinic semialdehyde (SSA) coupled to reduction of 2-ketoglutarate (2-KG) to D-2-hydroxyglutarate (D-2-HG). D,L-3-hydroxyisobutyrate and L-3-hydroxybutyrate (L-3-OHB) are also substrates for HOT with 10-fold lower activities. This chain is Hydroxyacid-oxoacid transhydrogenase, mitochondrial (ADHFE1), found in Homo sapiens (Human).